Here is a 4576-residue protein sequence, read N- to C-terminus: Mucin-2 (4576 aa).

The N-terminal stretch at 1-20 (MGLPLARLVAACLVLALAKG) is a signal peptide. S21 bears the Phosphoserine mark. The 174-residue stretch at 32–205 (HVCSTWGDFH…KINKPEVQCE (174 aa)) folds into the VWFD 1 domain. 29 cysteine pairs are disulfide-bonded: C34/C166, C56/C204, C64/C163, C216/C253, C223/C248, C235/C273, C255/C261, C263/C289, C293/C327, C306/C319, C310/C349, C329/C343, C351/C373, C368/C385, C371/C380, C389/C526, C411/C561, C433/C441, C572/C617, C586/C612, C599/C637, C619/C625, C627/C652, C659/C696, C672/C686, C676/C716, C698/C710, C718/C740, and C738/C747. D46 is a binding site for Ca(2+). 2 residues coordinate Cu(+): M143 and M151. A Cu(2+)-binding site is contributed by E153. N160 is a glycosylation site (N-linked (GlcNAc...) asparagine). Ca(2+) is bound by residues D168, N170, and E177. Position 275 (H275) interacts with Cu(2+). The TIL domain occupies 293–349 (CPNNMVYLESSSPCVDTCSHLEVSSLCEEHYMDGCFCPEGTVYDDITGSGCIPVSQC). A Cu(2+)-binding site is contributed by H322. M324 is a binding site for Cu(+). The VWFD 2 domain occupies 387–562 (ETCALEGGSH…NTWKAQSSCH (176 aa)). D401 lines the Ca(2+) pocket. N421 carries N-linked (GlcNAc...) asparagine glycosylation. Residues N528, N530, L532, D535, and D536 each coordinate Ca(2+). An N-linked (GlcNAc...) asparagine glycan is attached at N668. N-linked (GlcNAc...) asparagine glycosylation is present at N768. Intrachain disulfides connect C782–C818, C800–C812, C820–C843, C837–C855, C841–C850, C859–C990, C881–C1025, C890–C987, C907–C914, C1035–C1078, C1049–C1073, C1060–C1100, C1080–C1088, C1090–C1115, C1106–C1135, C1119–C1161, C1143–C1185, C1165–C1179, C1187–C1211, C1206–C1236, and C1209–C1219. An N-linked (GlcNAc...) asparagine glycan is attached at N838. Residues 857–1026 (STCSIYGSGH…NSWKEASTCP (170 aa)) form the VWFD 3 domain. D871 is a Ca(2+) binding site. N-linked (GlcNAc...) asparagine glycosylation occurs at N893. Positions 992, 994, 999, and 1000 each coordinate Ca(2+). N-linked (GlcNAc...) asparagine glycosylation is found at N1137 and N1152. Residues N1213, N1228, and N1244 are each glycosylated (N-linked (GlcNAc...) asparagine). O-linked (GalNAc) threonine glycosylation is found at T1265, T1268, T1269, T1281, and T1292. Ca(2+) is bound by residues N1305, H1308, G1315, D1316, and E1318. A glycan (N-linked (GlcNAc...) asparagine) is linked at N1352. Residues D1375 and Y1376 each contribute to the Ca(2+) site. 5 consecutive repeat copies span residues 1395–1415 (SPTT…PTTL), 1416–1427 (PTSSPVTSSATL), 1428–1437 (PTTSSITSTI), 1438–1453 (SPTT…SPTT), and 1454–1460 (SPTTSPT). The disordered stretch occupies residues 1395 to 2866 (SPTTSTTTLS…PTTSSTFTTP (1472 aa)). The stretch at 1478–1497 (PSTTSPTTPSTTPSTTSPTT) is one 7B repeat. One copy of the 8A repeat lies at 1498-1510 (PSTTSPTTPTSTS). Residues 1530–1556 (SPTTSPTTPSTTSPTISTTTSTISPTT) form a 9B repeat. The 10A repeat unit spans residues 1557-1572 (PSTTSPNTPSTTSSTI). The 10B repeat unit spans residues 1573 to 1588 (PSTTSPTTPSTTSPTI). The stretch at 1589-1607 (STTTSTTSPTTPSTTSPTT) is one 11A repeat. Residues 1608–1634 (PSTTSPTTPSTTSPTISTTTLTTSPTT) form an 11B repeat. 2 consecutive repeat copies span residues 1635–1642 (PSTTSPTT) and 1665–1681 (ISPT…LSTT). Residues N2529 and N2910 are each glycosylated (N-linked (GlcNAc...) asparagine). Composition is skewed to low complexity over residues 2975-3623 (PSST…GSTP) and 3631-3706 (PGPT…TSPS). Positions 2975–3706 (PSSTTTETPT…SSTSPITSPS (732 aa)) are disordered. N-linked (GlcNAc...) asparagine glycosylation is found at N3734, N3745, and N3756. Pro residues predominate over residues 3764-3774 (STPTPSTPTPT). Residues 3764–3806 (STPTPSTPTPTPSQTTTPSTTSSKSTPSTPQSTSPKSTLSTPT) form a disordered region. The segment covering 3775–3806 (PSQTTTPSTTSSKSTPSTPQSTSPKSTLSTPT) has biased composition (low complexity). Residues N3823, N3830, and N3903 are each glycosylated (N-linked (GlcNAc...) asparagine). One can recognise a VWFD 4 domain in the interval 3880–4063 (CYCTGWGDPH…VNDPSKPHCP (184 aa)). Cystine bridges form between C3882–C4023, C3904–C4062, and C3928–C3936. 13 N-linked (GlcNAc...) asparagine glycosylation sites follow: N3991, N4017, N4028, N4083, N4149, N4183, N4254, N4277, N4351, N4366, N4434, N4465, and N4488. VWFC domains are found at residues 4213–4282 (CVGP…TSCK) and 4320–4387 (GVCV…KKCQ). Cystine bridges form between C4471-C4518, C4485-C4532, C4494-C4548, and C4498-C4550. The CTCK domain maps to 4471-4556 (CSAVSVMKEI…SCLCQDTVCG (86 aa)).

As to quaternary structure, homomultimer; disulfide-linked. The N- and C-terminus mediate their assembly into higher order structures to form filaments. The CTCK domains of two polypeptides associate in the endoplasmic reticulum to generate intermolecularly disulfide-bonded dimers. These dimers progress to the Golgi apparatus, which is a more acidic environment than the endoplasmic reticulum. Under acidic conditions, the N-termini form non-covalent intermolecular interactions that juxtapose assemblies of the third VWD domain (VWD3) from different CTCK-linked dimers. The VWD3 assemblies then become disulfide bonded to one another to produce long, disulfide-linked polymers that remain highly compact until secretion. Interacts with FCGBP. Interacts with AGR2; disulfide-linked. O-glycosylated. O-glycosylation is required for mucin assembly. Goblet cells synthesize two forms of mucin that differ in branched chain O-glycosylation and the site of production in the colon. In terms of processing, may undergo proteolytic cleavage in the outer mucus layer of the colon, contributing to the expanded volume and loose nature of this layer which allows for bacterial colonization in contrast to the inner mucus layer which is dense and devoid of bacteria. Post-translationally, at low pH of 6 and under, undergoes autocatalytic cleavage in vitro in the N-terminal region of the fourth VWD domain. It is likely that this also occurs in vivo and is triggered by the low pH of the late secretory pathway. As to expression, highly expressed in goblet cells of the colon with lower levels in the small intestine and no expression in the stomach (at protein level).

The protein localises to the secreted. Functionally, coats the epithelia of the intestines and other mucus membrane-containing organs to provide a protective, lubricating barrier against particles and infectious agents at mucosal surfaces. Major constituent of the colon mucus, which is mainly formed by large polymeric networks of MUC2 secreted by goblet cells that cover the exposed surfaces of intestine. MUC2 networks form hydrogels that guard the underlying epithelium from pathogens and other hazardous matter entering from the outside world, while permitting nutrient absorption and gas exchange. Acts as a divalent copper chaperone that protects intestinal cells from copper toxicity and facilitates nutritional copper unptake into cells. Binds both Cu(2+) and its reduced form, Cu(1+), at two juxtaposed binding sites: Cu(2+), once reduced to Cu(1+) by vitamin C (ascorbate) or other dietary antioxidants, transits to the other binding site. MUC2-bound Cu(1+) is protected from oxidation in aerobic environments, and can be released for nutritional delivery to cells. Mucin gels store antimicrobial molecules that participate in innate immunity. Mucin glycoproteins also house and feed the microbiome, lubricate tissue surfaces, and may facilitate the removal of contaminants and waste products from the body. Goblet cells synthesize two forms of MUC2 mucin that differ in branched chain O-glycosylation and the site of production in the colon: a (1) 'thick' mucus that wraps the microbiota to form fecal pellets is produced in the proximal, ascending colon. 'Thick' mucus transits along the descending colon and is lubricated by a (2) 'thin' MUC2 mucus produced in the distal colon which adheres to the 'thick' mucus. The sequence is that of Mucin-2 from Mus musculus (Mouse).